A 388-amino-acid chain; its full sequence is Aldolase vrtJ (388 aa).

An N6-(pyridoxal phosphate)lysine modification is found at K241.

Belongs to the threonine aldolase family. Pyridoxal 5'-phosphate serves as cofactor.

Its pathway is secondary metabolite biosynthesis; terpenoid biosynthesis. Aldolase; part of the gene cluster that mediates the biosynthesis of viridicatumtoxin, a tetracycline-like fungal meroterpenoid with a unique, fused spirobicyclic ring system. The first step of the pathway is the production of the malonamoyl-CoA starter unit for the polyketide synthase vrtA. The aldolase vrtJ may be involved in the synthesis of the malonamate substrate for malonamoyl-CoA synthetase vrtB. The polyketide synthase vrtA then may utilize the malonamoyl-CoA starter unit, followed by sequential condensation of eight malonyl-CoA units to form the polyketide backbone. The cyclization of the last ring could be mediated by the lactamase-like protein vrtG. The proposed post-PKS tailoring steps are a hydroxylation at C5 catalyzed the cytochrome P450 monooxygenase vrtE, a hydroxylation at C12a catalyzed by VrtH and/or VrtI, and an O-methylation by the O-methyltransferase vrtF. VrtC is then proposed to catalyze the transfer of a geranyl group synthesized by vrtD to the aromatic C ring of the tetracyclic polyketide intermediate of viridicatumtoxin to yield previridicatumtoxin. Finally, the cytochrome P450 monooxygenase vrtK catalyzes the spirocyclization of the geranyl moiety of previridicatumtoxin to afford viridicatumtoxin. This is Aldolase vrtJ from Penicillium aethiopicum.